The following is a 67-amino-acid chain: Probable Sec-independent protein translocase protein TatE (67 aa).

The helical transmembrane segment at 4 to 21 (ISITKLLVVAALVVLLFG) threads the bilayer.

The protein belongs to the TatA/E family. TatE subfamily.

The protein localises to the cell inner membrane. Functionally, part of the twin-arginine translocation (Tat) system that transports large folded proteins containing a characteristic twin-arginine motif in their signal peptide across membranes. TatE shares overlapping functions with TatA. The protein is Probable Sec-independent protein translocase protein TatE of Salmonella dublin (strain CT_02021853).